The sequence spans 316 residues: Ferrochelatase (316 aa).

H188 and E269 together coordinate Fe cation.

It belongs to the ferrochelatase family.

The protein resides in the cytoplasm. The enzyme catalyses heme b + 2 H(+) = protoporphyrin IX + Fe(2+). It participates in porphyrin-containing compound metabolism; protoheme biosynthesis; protoheme from protoporphyrin-IX: step 1/1. Catalyzes the ferrous insertion into protoporphyrin IX. The sequence is that of Ferrochelatase from Wolinella succinogenes (strain ATCC 29543 / DSM 1740 / CCUG 13145 / JCM 31913 / LMG 7466 / NCTC 11488 / FDC 602W) (Vibrio succinogenes).